A 396-amino-acid polypeptide reads, in one-letter code: Pectinesterase (396 aa).

The first 21 residues, 1-21 (MQSKTLYLKATALLGGCTVFA), serve as a signal peptide directing secretion. Thr-174 is a substrate binding site. Residue Asp-232 is the Proton donor of the active site. Residue Asp-259 is the Nucleophile of the active site. Substrate is bound by residues Arg-324 and Trp-326.

It belongs to the pectinesterase family.

The protein resides in the secreted. The catalysed reaction is [(1-&gt;4)-alpha-D-galacturonosyl methyl ester](n) + n H2O = [(1-&gt;4)-alpha-D-galacturonosyl](n) + n methanol + n H(+). It functions in the pathway glycan metabolism; pectin degradation; 2-dehydro-3-deoxy-D-gluconate from pectin: step 1/5. Involved in maceration and soft-rotting of plant tissue. The protein is Pectinesterase (pme) of Ralstonia nicotianae (strain ATCC BAA-1114 / GMI1000) (Ralstonia solanacearum).